The following is a 166-amino-acid chain: Putative 4-hydroxy-4-methyl-2-oxoglutarate aldolase (166 aa).

Substrate contacts are provided by residues 74–77 (GDQI) and arginine 96. Residue aspartate 97 participates in a divalent metal cation binding.

This sequence belongs to the class II aldolase/RraA-like family. In terms of assembly, homotrimer. It depends on a divalent metal cation as a cofactor.

The catalysed reaction is 4-hydroxy-4-methyl-2-oxoglutarate = 2 pyruvate. It carries out the reaction oxaloacetate + H(+) = pyruvate + CO2. Functionally, catalyzes the aldol cleavage of 4-hydroxy-4-methyl-2-oxoglutarate (HMG) into 2 molecules of pyruvate. Also contains a secondary oxaloacetate (OAA) decarboxylase activity due to the common pyruvate enolate transition state formed following C-C bond cleavage in the retro-aldol and decarboxylation reactions. The sequence is that of Putative 4-hydroxy-4-methyl-2-oxoglutarate aldolase from Xanthomonas oryzae pv. oryzae (strain MAFF 311018).